A 307-amino-acid chain; its full sequence is Transmembrane protein 200B (307 aa).

The interval 1 to 38 (MTAGSPEECGEVRRSPEGRVSRLGRRLGRRRRPRSPPE) is disordered. A compositionally biased stretch (basic and acidic residues) spans 10–20 (GEVRRSPEGRV). The span at 22 to 34 (RLGRRLGRRRRPR) shows a compositional bias: basic residues. Residues 53-73 (GAFAALGALVVLVGMGIAVAG) form a helical membrane-spanning segment. The tract at residues 81-111 (APGSRAANASSPQMSELRREGRGGGRAHGPH) is disordered. Asparagine 88 is a glycosylation site (N-linked (GlcNAc...) asparagine). A compositionally biased stretch (basic and acidic residues) spans 96-111 (ELRREGRGGGRAHGPH). Residues 116–136 (LLGPVIMGVGLFVFICANTLL) traverse the membrane as a helical segment. The tract at residues 180 to 211 (AVGCAEPEIWDPSPRRGTSPVPSVRSLRSEPA) is disordered.

It belongs to the TMEM200 family.

The protein resides in the membrane. The polypeptide is Transmembrane protein 200B (TMEM200B) (Homo sapiens (Human)).